We begin with the raw amino-acid sequence, 203 residues long: TATA-binding protein 2 (203 aa).

Repeat copies occupy residues 28-104 (LQNI…ARII) and 118-195 (IQNI…YPVL).

This sequence belongs to the TBP family. In terms of assembly, belongs to the TFIID complex together with the TBP-associated factors (TAFs). Binds DNA as monomer. Interacts with RF2A and TFIIB. Interacts with CWZF7.

The protein resides in the nucleus. Functionally, general transcription factor that functions at the core of the DNA-binding multiprotein factor TFIID. Binding of TFIID to the TATA box is the initial transcriptional step of the pre-initiation complex (PIC), playing a role in the activation of eukaryotic genes transcribed by RNA polymerase II. This is TATA-binding protein 2 (TBP2) from Oryza sativa subsp. japonica (Rice).